The primary structure comprises 285 residues: 4-diphosphocytidyl-2-C-methyl-D-erythritol kinase (285 aa).

The active site involves lysine 12. 94-104 (PAQAGMGGGSS) lines the ATP pocket. Aspartate 136 is an active-site residue.

The protein belongs to the GHMP kinase family. IspE subfamily.

The enzyme catalyses 4-CDP-2-C-methyl-D-erythritol + ATP = 4-CDP-2-C-methyl-D-erythritol 2-phosphate + ADP + H(+). It participates in isoprenoid biosynthesis; isopentenyl diphosphate biosynthesis via DXP pathway; isopentenyl diphosphate from 1-deoxy-D-xylulose 5-phosphate: step 3/6. Catalyzes the phosphorylation of the position 2 hydroxy group of 4-diphosphocytidyl-2C-methyl-D-erythritol. This chain is 4-diphosphocytidyl-2-C-methyl-D-erythritol kinase, found in Paracidovorax citrulli (strain AAC00-1) (Acidovorax citrulli).